The primary structure comprises 331 residues: uncharacterized protein (331 aa).

7 consecutive Pentapeptide repeat domains span residues 20–59 (LKLP…NLGQ), 60–99 (ANLV…ILRD), 100–139 (SDMT…NMRQ), 151–190 (AILG…DLRK), 191–230 (ADLS…KISE), 231–270 (AEMT…DLSR), and 271–310 (ANLT…DLMS).

This is an uncharacterized protein from Synechocystis sp. (strain ATCC 27184 / PCC 6803 / Kazusa).